The sequence spans 480 residues: Caspase-8 (480 aa).

The propeptide occupies Met-1–Asp-218. DED domains are found at residues Phe-3 to Asp-80 and Tyr-101 to Asp-177. Residues Ser-188 and Ser-213 each carry the phosphoserine modification. At Lys-226 the chain carries N6-acetyllysine. His-319 is a catalytic residue. Tyr-336 is subject to Phosphotyrosine. Cys-362 is an active-site residue. A propeptide spanning residues Phe-377–Asp-387 is cleaved from the precursor. Position 389 is a phosphoserine; by CDK1 (Ser-389).

Belongs to the peptidase C14A family. In terms of assembly, heterotetramer that consists of two anti-parallel arranged heterodimers, each one formed by a 18 kDa (p18) and a 10 kDa (p10) subunit. Component of the death-induced signaling complex (DISC) composed of cell surface receptor FAS/CD95 or TNFRSF1A, adapter protein FADD and the CASP8 protease; recruitment of CASP8 to the complex is required for processing of CASP8 into the p18 and p10 subunits. Component of the AIM2 PANoptosome complex, a multiprotein complex that drives inflammatory cell death (PANoptosis). Interacts with CFLAR and PEA15. Interacts with RFFL and RNF34; negatively regulate CASP8 through proteasomal degradation. Interacts with TNFAIP8L2. Interacts with CASP8AP2. Interacts with NOL3; decreases CASP8 activity in a mitochondria localization- and phosphorylation-dependent manner and this interaction is dissociated by calcium. Interacts with UBR2. Interacts with RIPK1. Interacts with stimulated TNFRSF10B; this interaction is followed by CASP8 proteolytic cleavage and activation. Post-translationally, generation of the subunits requires association with the death-inducing signaling complex (DISC), whereas additional processing is likely due to the autocatalytic activity of the activated protease. GZMB and CASP10 can be involved in these processing events. In terms of processing, (Microbial infection) Proteolytically cleaved by the cowpox virus CRMA death inhibitory protein. Phosphorylation on Ser-389 during mitosis by CDK1 inhibits activation by proteolysis and prevents apoptosis. This phosphorylation occurs in cancer cell lines, as well as in primary breast tissues and lymphocytes. As to expression, expressed in a wide variety of tissues. Highest expression in spleen, thymus, lung, liver and kidney. Lower expression in heart, brain, testis and skeletal muscle.

The protein resides in the cytoplasm. It localises to the nucleus. The enzyme catalyses Strict requirement for Asp at position P1 and has a preferred cleavage sequence of (Leu/Asp/Val)-Glu-Thr-Asp-|-(Gly/Ser/Ala).. Its activity is regulated as follows. CASP8 activity is restricted by RIPK1. (Microbial infection) Inhibited by baculovirus p35 protein P35. In terms of biological role, thiol protease that plays a key role in programmed cell death by acting as a molecular switch for apoptosis, necroptosis and pyroptosis, and is required to prevent tissue damage during embryonic development and adulthood. Initiator protease that induces extrinsic apoptosis by mediating cleavage and activation of effector caspases responsible for FAS/CD95-mediated and TNFRSF1A-induced cell death. Cleaves and activates effector caspases CASP3, CASP4, CASP6, CASP7, CASP9 and CASP10. Binding to the adapter molecule FADD recruits it to either receptor FAS/CD95 or TNFRSF1A. The resulting aggregate called the death-inducing signaling complex (DISC) performs CASP8 proteolytic activation. The active dimeric enzyme is then liberated from the DISC and free to activate downstream apoptotic proteases. Proteolytic fragments of the N-terminal propeptide (termed CAP3, CAP5 and CAP6) are likely retained in the DISC. In addition to extrinsic apoptosis, also acts as a negative regulator of necroptosis: acts by cleaving RIPK1 at 'Asp-325', which is crucial to inhibit RIPK1 kinase activity, limiting TNF-induced apoptosis, necroptosis and inflammatory response. Also able to initiate pyroptosis by mediating cleavage and activation of gasdermin-C and -D (GSDMC and GSDMD, respectively): gasdermin cleavage promotes release of the N-terminal moiety that binds to membranes and forms pores, triggering pyroptosis. Initiates pyroptosis following inactivation of MAP3K7/TAK1. Also acts as a regulator of innate immunity by mediating cleavage and inactivation of N4BP1 downstream of TLR3 or TLR4, thereby promoting cytokine production. May participate in the Granzyme B (GZMB) cell death pathways. Cleaves PARP1 and PARP2. This is Caspase-8 from Mus musculus (Mouse).